The sequence spans 1009 residues: Cilia- and flagella-associated protein 70 (1009 aa).

Over residues 410 to 428 the composition is skewed to basic and acidic residues; the sequence is NLKEDKPVKEKDIDGRPRP. The segment at 410–457 is disordered; it reads NLKEDKPVKEKDIDGRPRPGDVQAPSIKSQSSDTPLEGEPPLSHNPEG. 7 TPR repeats span residues 498–531, 635–668, 669–702, 704–736, 888–921, 923–954, and 956–988; these read PPLT…EYYR, SEQL…EPQN, LDHW…NQSH, HSLL…EPTN, HFIF…SPSC, TWLG…NNYN, and EVWA…KLKD.

Belongs to the CFAP70 family.

The protein localises to the cell projection. Its subcellular location is the cilium. It is found in the flagellum. It localises to the cytoplasm. The protein resides in the cytoskeleton. The protein localises to the flagellum basal body. Its subcellular location is the cilium axoneme. In terms of biological role, axoneme-binding protein that plays a role in the regulation of ciliary motility and cilium length. This chain is Cilia- and flagella-associated protein 70, found in Macaca fascicularis (Crab-eating macaque).